The following is a 262-amino-acid chain: uncharacterized protein (262 aa).

The stretch at 41-118 (ELQKNEKIDK…EEKAEDFINK (78 aa)) forms a coiled coil.

This is an uncharacterized protein from Plasmodium falciparum (isolate 3D7).